Consider the following 132-residue polypeptide: Small ribosomal subunit protein uS8 (132 aa).

This sequence belongs to the universal ribosomal protein uS8 family. In terms of assembly, part of the 30S ribosomal subunit. Contacts proteins S5 and S12.

Functionally, one of the primary rRNA binding proteins, it binds directly to 16S rRNA central domain where it helps coordinate assembly of the platform of the 30S subunit. The polypeptide is Small ribosomal subunit protein uS8 (Lactobacillus johnsonii (strain CNCM I-12250 / La1 / NCC 533)).